The chain runs to 84 residues: Anthracycline acyl carrier protein DpsG (84 aa).

One can recognise a Carrier domain in the interval 3 to 80; it reads ELSLAELREI…SMLIFVNERL (78 aa). S40 bears the O-(pantetheine 4'-phosphoryl)serine mark.

It participates in antibiotic biosynthesis; daunorubicin biosynthesis. Its pathway is antibiotic biosynthesis; carminomycin biosynthesis. It functions in the pathway antibiotic biosynthesis; rhodomycin biosynthesis. The protein operates within antibiotic biosynthesis; aclacinomycin biosynthesis. Its function is as follows. Involved in the biosynthesis of aklanonate which is an important precursor common to the formation of the clinically significant anthracyclines such as carminomycin, daunorubicin (daunomycin), rhodomycin, aclacinomycin T (aklavin) and aclacinomycin A (aclarubicin). These compounds are aromatic polyketide antibiotics that exhibit high cytotoxicity and are widely applied in the chemotherapy of a variety of cancers. In Streptomyces peucetius, this protein is Anthracycline acyl carrier protein DpsG (dpsG).